We begin with the raw amino-acid sequence, 227 residues long: Phosphoribosylformylglycinamidine synthase subunit PurQ (227 aa).

The Glutamine amidotransferase type-1 domain occupies 3–225 (FAVIVFPGSN…LRNWRESHVV (223 aa)). The active-site Nucleophile is the Cys-86. Active-site residues include His-194 and Glu-196.

In terms of assembly, part of the FGAM synthase complex composed of 1 PurL, 1 PurQ and 2 PurS subunits.

It is found in the cytoplasm. It carries out the reaction N(2)-formyl-N(1)-(5-phospho-beta-D-ribosyl)glycinamide + L-glutamine + ATP + H2O = 2-formamido-N(1)-(5-O-phospho-beta-D-ribosyl)acetamidine + L-glutamate + ADP + phosphate + H(+). The enzyme catalyses L-glutamine + H2O = L-glutamate + NH4(+). It participates in purine metabolism; IMP biosynthesis via de novo pathway; 5-amino-1-(5-phospho-D-ribosyl)imidazole from N(2)-formyl-N(1)-(5-phospho-D-ribosyl)glycinamide: step 1/2. Functionally, part of the phosphoribosylformylglycinamidine synthase complex involved in the purines biosynthetic pathway. Catalyzes the ATP-dependent conversion of formylglycinamide ribonucleotide (FGAR) and glutamine to yield formylglycinamidine ribonucleotide (FGAM) and glutamate. The FGAM synthase complex is composed of three subunits. PurQ produces an ammonia molecule by converting glutamine to glutamate. PurL transfers the ammonia molecule to FGAR to form FGAM in an ATP-dependent manner. PurS interacts with PurQ and PurL and is thought to assist in the transfer of the ammonia molecule from PurQ to PurL. The polypeptide is Phosphoribosylformylglycinamidine synthase subunit PurQ (Halalkalibacterium halodurans (strain ATCC BAA-125 / DSM 18197 / FERM 7344 / JCM 9153 / C-125) (Bacillus halodurans)).